The chain runs to 630 residues: Golgi apyrase (630 aa).

At 1–500 (MLIENTNDRF…RKQSSSLSNK (500 aa)) the chain is on the lumenal side. E152 acts as the Proton acceptor in catalysis. A helical membrane pass occupies residues 501-517 (GFLMWFAIICCIFYLIF). Residues 518–630 (HRSHIIRRRF…SKFKDSRLYD (113 aa)) lie on the Cytoplasmic side of the membrane. The segment at 586 to 606 (SSATMQREHEPQRTASQSANL) is disordered.

It belongs to the GDA1/CD39 NTPase family. In terms of assembly, interacts with activator subunit VMA13 of vacuolar H(+)-ATPase. Interacts with CDC55; this interaction is disrupted by adenovirus E4orf4, which remains associated with both YND1 and CDC55. Requires Ca(2+) as cofactor. The cofactor is Mg(2+). It depends on Mn(2+) as a cofactor.

Its subcellular location is the golgi apparatus. The protein localises to the membrane. It catalyses the reaction a ribonucleoside 5'-triphosphate + 2 H2O = a ribonucleoside 5'-phosphate + 2 phosphate + 2 H(+). The protein operates within protein modification; protein glycosylation. Its activity is regulated as follows. Activity is inhibited both by interaction with VMA13 and by V-ATPase acidification of the lumen. The activity of VMA13 is not required for YND1 inhibition. Its function is as follows. Catalyzes the hydrolysis of phosphoanhydride bonds of nucleoside tri- and di-phosphates. Has equal high activity toward ADP/ATP, GDP/GTP, and UDP/UTP and approximately 50% less toward CDP/CTP and thiamine pyrophosphate. Has no activity toward GMP. Required for Golgi glycosylation and cell wall integrity. Together with CDC55, required for adenovirus E4orf4 (early region 4 open reading frame 4) induced toxicity, the apyrase activity is not required for this function. Plays a role in sphingolipid synthesis. This Saccharomyces cerevisiae (strain ATCC 204508 / S288c) (Baker's yeast) protein is Golgi apyrase (YND1).